The chain runs to 607 residues: UvrABC system protein C (607 aa).

The GIY-YIG domain maps to 15-94 (ENPGVYLMKN…IKRHRPYFNV (80 aa)). A UVR domain is found at 204–239 (DQVLKLLIRLMNEASARLDYETAALRRDQIASIKEV).

It belongs to the UvrC family. Interacts with UvrB in an incision complex.

The protein localises to the cytoplasm. Functionally, the UvrABC repair system catalyzes the recognition and processing of DNA lesions. UvrC both incises the 5' and 3' sides of the lesion. The N-terminal half is responsible for the 3' incision and the C-terminal half is responsible for the 5' incision. The protein is UvrABC system protein C of Dehalococcoides mccartyi (strain CBDB1).